The following is a 375-amino-acid chain: GDP-mannose transporter GONST2 (375 aa).

The next 9 helical transmembrane spans lie at Leu79–Val99, Met112–Val132, Leu141–Tyr161, Tyr165–Gly185, Trp199–Phe219, Met262–Gly282, Val300–Leu320, Thr327–Phe347, and Val349–Phe369.

Belongs to the nucleotide-sugar transporter family. GDP-Mannose:GMP antiporter (GMA) (TC 2.A.7.13) subfamily. Expressed in rosette leaves, stems, flowers and siliques.

Its subcellular location is the golgi apparatus membrane. GDP-mannose transporter that may be involved in the import of GDP-mannose from the cytoplasm into the Golgi lumen. The protein is GDP-mannose transporter GONST2 of Arabidopsis thaliana (Mouse-ear cress).